The following is a 285-amino-acid chain: Zinc transporter ZupT (285 aa).

3 helical membrane passes run 13 to 33 (AFLLTLLAGLATGIGSCIAFF), 41 to 61 (FLCVSLGFSAGVMIYVSMIEM), and 80 to 100 (WITVISFFAGIAIIALIDKFV). Positions 153 and 156 each coordinate Fe(2+). Position 156 (Glu156) interacts with Zn(2+). Residues 160-180 (TFVSALEGASLAIPITIAIAI) traverse the membrane as a helical segment. His181 is a binding site for Zn(2+). Residues Asn182, Glu185, and Glu214 each coordinate Fe(2+). Residue Glu185 participates in Zn(2+) binding. Transmembrane regions (helical) follow at residues 204-224 (FLYSFLSGMSEPIGAIIGYTL), 228-248 (IFNDITLGILLSAVAGIMVFI), and 265-285 (LAIYGLIAGMVVMAVSLLLFI).

This sequence belongs to the ZIP transporter (TC 2.A.5) family. ZupT subfamily.

The protein resides in the cell membrane. The enzyme catalyses Zn(2+)(in) = Zn(2+)(out). Mediates zinc uptake. May also transport other divalent cations. The chain is Zinc transporter ZupT from Clostridium perfringens (strain 13 / Type A).